Consider the following 172-residue polypeptide: NAD(P)H-quinone oxidoreductase subunit I, chloroplastic (172 aa).

4Fe-4S ferredoxin-type domains follow at residues 55-84 and 95-124; these read GRIH…VDWK and LNYS…MTEE. [4Fe-4S] cluster-binding residues include Cys64, Cys67, Cys70, Cys74, Cys104, Cys107, Cys110, and Cys114.

The protein belongs to the complex I 23 kDa subunit family. NDH is composed of at least 16 different subunits, 5 of which are encoded in the nucleus. The cofactor is [4Fe-4S] cluster.

It is found in the plastid. The protein localises to the chloroplast thylakoid membrane. It catalyses the reaction a plastoquinone + NADH + (n+1) H(+)(in) = a plastoquinol + NAD(+) + n H(+)(out). It carries out the reaction a plastoquinone + NADPH + (n+1) H(+)(in) = a plastoquinol + NADP(+) + n H(+)(out). In terms of biological role, NDH shuttles electrons from NAD(P)H:plastoquinone, via FMN and iron-sulfur (Fe-S) centers, to quinones in the photosynthetic chain and possibly in a chloroplast respiratory chain. The immediate electron acceptor for the enzyme in this species is believed to be plastoquinone. Couples the redox reaction to proton translocation, and thus conserves the redox energy in a proton gradient. The chain is NAD(P)H-quinone oxidoreductase subunit I, chloroplastic from Capsella bursa-pastoris (Shepherd's purse).